The primary structure comprises 390 residues: GTPase Obg/CgtA (390 aa).

In terms of domain architecture, Obg spans Met-1–Leu-159. The 174-residue stretch at Ala-160–Asp-333 folds into the OBG-type G domain. Residues Gly-166–Ser-173, Phe-191–Val-195, Asp-213–Gly-216, Asn-283–Asp-286, and Ser-314–Ala-316 contribute to the GTP site. Residues Ser-173 and Thr-193 each contribute to the Mg(2+) site.

It belongs to the TRAFAC class OBG-HflX-like GTPase superfamily. OBG GTPase family. Monomer. Interacts with SpoT (AC Q9KNM2) in a yeast 2-hybrid assay. The cofactor is Mg(2+).

It localises to the cytoplasm. In terms of biological role, depletion experiments lead to gene down regulation and a dramatic increase in ppGpp levels, like those seen in the stringent response. There is no change in cell morphology in depletion experiments, but cells are very sensitive to the DNA-damaging agent hydroxyurea and are very elongated. Overexpression reduces growth and leads to elongated cells. Overexpression of proteins with C-terminal deletions of 29 or 62 amino acids showed fewer elongated cells. Functionally, an essential GTPase which binds GTP, GDP and possibly (p)ppGpp with moderate affinity, with high nucleotide exchange rates and a fairly low GTP hydrolysis rate. It may play a role in control of the cell cycle, stress response, ribosome biogenesis and in those bacteria that undergo differentiation, in morphogenesis control. GTPase activity is stimulated by 50S ribosomal subunits. The sequence is that of GTPase Obg/CgtA from Vibrio cholerae serotype O1 (strain ATCC 39315 / El Tor Inaba N16961).